The primary structure comprises 82 residues: Small ribosomal subunit protein bS16 (82 aa).

The protein belongs to the bacterial ribosomal protein bS16 family.

This is Small ribosomal subunit protein bS16 from Actinobacillus pleuropneumoniae serotype 5b (strain L20).